Here is a 1073-residue protein sequence, read N- to C-terminus: Ubiquitin carboxyl-terminal hydrolase 53 (1073 aa).

Positions 30–351 constitute a USP domain; the sequence is KGLLNEPGQN…QPLLLFYANP (322 aa). Cys41 serves as the catalytic Nucleophile. Residues His66, Cys68, Cys73, Cys76, His132, Cys144, Cys149, His152, Cys165, Cys168, Cys224, and Cys228 each coordinate Zn(2+). His301 (proton acceptor) is an active-site residue. Disordered stretches follow at residues 391–437 and 485–636; these read LKEN…HIDQ and LSHF…PKQK. The span at 407–418 shows a compositional bias: polar residues; that stretch reads KFPTDNISSSNR. Residues 524–541 are compositionally biased toward low complexity; sequence QSRASAQIISSSKSQILA. The segment covering 553–563 has biased composition (polar residues); that stretch reads DNGTGYDTDSS. Positions 612 to 627 are enriched in low complexity; it reads NISNKPKSSKDPSFSN.

This sequence belongs to the peptidase C19 family. Interacts (via the C-terminal region) with the heterodimer TJP1:TJP2. In terms of tissue distribution, expressed predominantly in skeletal muscle and heart.

The protein resides in the cell junction. It localises to the tight junction. It carries out the reaction Thiol-dependent hydrolysis of ester, thioester, amide, peptide and isopeptide bonds formed by the C-terminal Gly of ubiquitin (a 76-residue protein attached to proteins as an intracellular targeting signal).. In terms of biological role, deubiquitinase that mediates 'Lys-63'-linked deubiquitination of tight junction proteins, such as MARVELD2 and LSR, and which is involved in the survival of auditory hair cells and hearing. Specifically cleaves 'Lys-63'-linked polyubiquitin chains composed of at least 3 ubiquitin molecules, while it is not able to deubiquitinate substrates with shorter ubiquitin chains: recognizes ubiquitin chain in position S2 and catalyzes en bloc cleavage of polyubiquitin chains from substrate proteins. Probably acts by modulating the barrier properties and mechanical stability of tight junctions via deubiquitination of MARVELD2 and LSR. In Homo sapiens (Human), this protein is Ubiquitin carboxyl-terminal hydrolase 53.